Here is a 213-residue protein sequence, read N- to C-terminus: Phosphatidylserine decarboxylase proenzyme (213 aa).

The active-site Schiff-base intermediate with substrate; via pyruvic acid is Ser182. At Ser182 the chain carries Pyruvic acid (Ser); by autocatalysis.

This sequence belongs to the phosphatidylserine decarboxylase family. PSD-A subfamily. In terms of assembly, heterodimer of a large membrane-associated beta subunit and a small pyruvoyl-containing alpha subunit. Pyruvate serves as cofactor. Is synthesized initially as an inactive proenzyme. Formation of the active enzyme involves a self-maturation process in which the active site pyruvoyl group is generated from an internal serine residue via an autocatalytic post-translational modification. Two non-identical subunits are generated from the proenzyme in this reaction, and the pyruvate is formed at the N-terminus of the alpha chain, which is derived from the carboxyl end of the proenzyme. The post-translation cleavage follows an unusual pathway, termed non-hydrolytic serinolysis, in which the side chain hydroxyl group of the serine supplies its oxygen atom to form the C-terminus of the beta chain, while the remainder of the serine residue undergoes an oxidative deamination to produce ammonia and the pyruvoyl prosthetic group on the alpha chain.

It localises to the cell membrane. The catalysed reaction is a 1,2-diacyl-sn-glycero-3-phospho-L-serine + H(+) = a 1,2-diacyl-sn-glycero-3-phosphoethanolamine + CO2. It functions in the pathway phospholipid metabolism; phosphatidylethanolamine biosynthesis; phosphatidylethanolamine from CDP-diacylglycerol: step 2/2. Catalyzes the formation of phosphatidylethanolamine (PtdEtn) from phosphatidylserine (PtdSer). The polypeptide is Phosphatidylserine decarboxylase proenzyme (Chlorobium phaeobacteroides (strain BS1)).